The primary structure comprises 187 residues: ATP synthase subunit delta (187 aa).

It belongs to the ATPase delta chain family. As to quaternary structure, F-type ATPases have 2 components, F(1) - the catalytic core - and F(0) - the membrane proton channel. F(1) has five subunits: alpha(3), beta(3), gamma(1), delta(1), epsilon(1). F(0) has three main subunits: a(1), b(2) and c(10-14). The alpha and beta chains form an alternating ring which encloses part of the gamma chain. F(1) is attached to F(0) by a central stalk formed by the gamma and epsilon chains, while a peripheral stalk is formed by the delta and b chains.

The protein localises to the cell inner membrane. In terms of biological role, f(1)F(0) ATP synthase produces ATP from ADP in the presence of a proton or sodium gradient. F-type ATPases consist of two structural domains, F(1) containing the extramembraneous catalytic core and F(0) containing the membrane proton channel, linked together by a central stalk and a peripheral stalk. During catalysis, ATP synthesis in the catalytic domain of F(1) is coupled via a rotary mechanism of the central stalk subunits to proton translocation. Its function is as follows. This protein is part of the stalk that links CF(0) to CF(1). It either transmits conformational changes from CF(0) to CF(1) or is implicated in proton conduction. The chain is ATP synthase subunit delta from Leptospira biflexa serovar Patoc (strain Patoc 1 / Ames).